A 1588-amino-acid chain; its full sequence is Ubiquitin carboxyl-terminal hydrolase 54 (1588 aa).

R12 carries the post-translational modification Omega-N-methylarginine. The USP domain maps to 31-352 (KGLSNEPGQN…QPLLLLYADP (322 aa)). Catalysis depends on C42, which acts as the Nucleophile. Zn(2+) contacts are provided by H67, C69, C74, C77, H133, C145, C150, H153, C166, C169, C225, and C229. H302 functions as the Proton acceptor in the catalytic mechanism. Composition is skewed to basic and acidic residues over residues 380–391 (DSGHLTDSECNQ) and 424–434 (SEGETLKEKQA). 2 disordered regions span residues 380 to 447 (DSGH…TSRL) and 459 to 519 (HSRP…PTWR). S424 bears the Phosphoserine mark. Composition is skewed to polar residues over residues 436 to 445 (RNASKSSSTS) and 459 to 471 (HSRP…TNAA). The span at 499–512 (TESTSSEARSSSSS) shows a compositional bias: low complexity. Phosphoserine is present on residues S574, S613, and S616. Low complexity predominate over residues 601 to 616 (ESGYESSERNSSSPVS). Positions 601–620 (ESGYESSERNSSSPVSLDAA) are disordered. Residues 678 to 712 (TSKSELDELQEEVARRAQEQELRKKREKELEAAKG) are a coiled coil. Disordered regions lie at residues 801-839 (RSLQ…EQSV), 856-895 (DSEL…SPPG), 950-969 (EDNS…TTQD), 1093-1172 (TRDV…SRRR), and 1525-1562 (GSVL…SAGE). Low complexity predominate over residues 808–825 (QQQPPSQQPVQPSASLPS). Residues 878 to 895 (SLVSPSPAQSVSQHSPPG) are compositionally biased toward polar residues. S1138 carries the post-translational modification Phosphoserine. Residues 1536–1547 (RRIDVPPDDDGR) show a composition bias toward basic and acidic residues.

Belongs to the peptidase C19 family.

The catalysed reaction is Thiol-dependent hydrolysis of ester, thioester, amide, peptide and isopeptide bonds formed by the C-terminal Gly of ubiquitin (a 76-residue protein attached to proteins as an intracellular targeting signal).. In terms of biological role, deubiquitinase that specifically mediates 'Lys-63'-linked deubiquitination of substrates with a polyubiquitin chain composed of at least 3 ubiquitins. Specifically recognizes ubiquitin chain in position S2 and catalyzes cleavage of polyubiquitin within 'Lys-63'-linked chains. Not able to deubiquitinate substrates with shorter ubiquitin chains. Mediates deubiquitination of PLK4, maintaining PLK4 stability by reducing its ubiquitination-mediated degradation. In Rattus norvegicus (Rat), this protein is Ubiquitin carboxyl-terminal hydrolase 54 (Usp54).